The chain runs to 550 residues: MFCVQCEQTIRTPAGNGCSYAQGMCGKTAETSDLQDLLIAALQGLSAWAVKAREYGIINHDVDNFAPRAFFSTLTNVNFDSPRIVGYAREAIALREALKAQCLSVDANAHCDNPMADLQLVSDDLGELQRQAAEFTPNKDKAAIGENILGLRLLCLYGLKGAAAYMEHAHVLGQYDNDIYAQYHKIMAWLGTWPADMNALLECAMEIGQMNFKVMSILDAGETTKYGHPTPTQVNVKATEGKCILISGHDLKDLYNLLEQTEGTGVNVYTHGEMLPAHGYPELRKFKHLVGNYGSGWQNQQVEFARFPGPIVMTSNCIIDPTVGSYDDRIWTRSIVGWPGVSHLEGDDFGPVIAQAQQMAGFPYSEIPHLITVGFGRQTLLGAADTLIDLVSREKLRHIFLVGGCDGARGERNYFTDFATSVPDDCLILTLACGKYRFNKLEFGDIEGLPRLVDAGQCNDAYSAIILAVTLAEKLGCGVNDLPLSLVLSWFEQKAIVILLTLLSLGVKNIVTGPTAPGFFTPDLLAILNEKFGLRSVTTVEEDMKQLLSA.

Positions 3, 6, 18, and 25 each coordinate [2Fe-2S] cluster. Residues His-249, Glu-273, Cys-317, Cys-405, Cys-433, Cys-458, Glu-492, and Lys-494 each contribute to the hybrid [4Fe-2O-2S] cluster site. Cys-405 carries the post-translational modification Cysteine persulfide.

This sequence belongs to the HCP family. Requires [2Fe-2S] cluster as cofactor. Hybrid [4Fe-2O-2S] cluster is required as a cofactor.

The protein localises to the cytoplasm. The catalysed reaction is A + NH4(+) + H2O = hydroxylamine + AH2 + H(+). Its function is as follows. Catalyzes the reduction of hydroxylamine to form NH(3) and H(2)O. This is Hydroxylamine reductase from Salmonella agona (strain SL483).